A 558-amino-acid chain; its full sequence is CTP synthase (558 aa).

The segment at 1–270 (MTKYVFVTGG…DDLICRELDL (270 aa)) is amidoligase domain. S13 is a binding site for CTP. S13 serves as a coordination point for UTP. ATP-binding positions include 14-19 (SLGKGI) and D71. Mg(2+) is bound by residues D71 and E144. Residues 151-153 (DIE), 191-196 (KTKPTQ), and K227 contribute to the CTP site. UTP-binding positions include 191–196 (KTKPTQ) and K227. Residues 295–547 (TIGMVGKYVE…ISAALEHQKK (253 aa)) form the Glutamine amidotransferase type-1 domain. G356 lines the L-glutamine pocket. C383 acts as the Nucleophile; for glutamine hydrolysis in catalysis. Residues 384–387 (LGMQ), E407, and R473 contribute to the L-glutamine site. Active-site residues include H520 and E522.

It belongs to the CTP synthase family. Homotetramer.

It catalyses the reaction UTP + L-glutamine + ATP + H2O = CTP + L-glutamate + ADP + phosphate + 2 H(+). The catalysed reaction is L-glutamine + H2O = L-glutamate + NH4(+). The enzyme catalyses UTP + NH4(+) + ATP = CTP + ADP + phosphate + 2 H(+). It functions in the pathway pyrimidine metabolism; CTP biosynthesis via de novo pathway; CTP from UDP: step 2/2. Allosterically activated by GTP, when glutamine is the substrate; GTP has no effect on the reaction when ammonia is the substrate. The allosteric effector GTP functions by stabilizing the protein conformation that binds the tetrahedral intermediate(s) formed during glutamine hydrolysis. Inhibited by the product CTP, via allosteric rather than competitive inhibition. Catalyzes the ATP-dependent amination of UTP to CTP with either L-glutamine or ammonia as the source of nitrogen. Regulates intracellular CTP levels through interactions with the four ribonucleotide triphosphates. The sequence is that of CTP synthase from Polynucleobacter necessarius subsp. necessarius (strain STIR1).